A 355-amino-acid polypeptide reads, in one-letter code: Probable nitronate monooxygenase (355 aa).

Residues Asn-71, Gln-175, Gly-180, Gly-218, and 237–240 each bind FMN; that span reads QMGT.

It belongs to the nitronate monooxygenase family. NMO class I subfamily. FMN is required as a cofactor.

It catalyses the reaction 3 propionate 3-nitronate + 3 O2 + H2O = 3 3-oxopropanoate + 2 nitrate + nitrite + H2O2 + 3 H(+). Its function is as follows. Nitronate monooxygenase that uses molecular oxygen to catalyze the oxidative denitrification of alkyl nitronates. Acts on propionate 3-nitronate (P3N), the presumed physiological substrate. Probably functions in the detoxification of P3N, a metabolic poison produced by plants and fungi as a defense mechanism. The polypeptide is Probable nitronate monooxygenase (Staphylococcus aureus (strain MRSA252)).